The chain runs to 338 residues: tRNA N6-adenosine threonylcarbamoyltransferase (338 aa).

Fe cation-binding residues include histidine 110, histidine 114, and tyrosine 131. Substrate-binding positions include tyrosine 131–glycine 135, aspartate 163, aspartate 184, and asparagine 268. Aspartate 296 provides a ligand contact to Fe cation.

It belongs to the KAE1 / TsaD family. Fe(2+) is required as a cofactor.

It is found in the cytoplasm. The catalysed reaction is L-threonylcarbamoyladenylate + adenosine(37) in tRNA = N(6)-L-threonylcarbamoyladenosine(37) in tRNA + AMP + H(+). Its function is as follows. Required for the formation of a threonylcarbamoyl group on adenosine at position 37 (t(6)A37) in tRNAs that read codons beginning with adenine. Is probably involved in the transfer of the threonylcarbamoyl moiety of threonylcarbamoyl-AMP (TC-AMP) to the N6 group of A37. This Staphylothermus marinus (strain ATCC 43588 / DSM 3639 / JCM 9404 / F1) protein is tRNA N6-adenosine threonylcarbamoyltransferase.